Here is a 257-residue protein sequence, read N- to C-terminus: Imidazole glycerol phosphate synthase subunit HisF (257 aa).

Catalysis depends on residues Asp12 and Asp131.

This sequence belongs to the HisA/HisF family. Heterodimer of HisH and HisF.

It localises to the cytoplasm. The enzyme catalyses 5-[(5-phospho-1-deoxy-D-ribulos-1-ylimino)methylamino]-1-(5-phospho-beta-D-ribosyl)imidazole-4-carboxamide + L-glutamine = D-erythro-1-(imidazol-4-yl)glycerol 3-phosphate + 5-amino-1-(5-phospho-beta-D-ribosyl)imidazole-4-carboxamide + L-glutamate + H(+). Its pathway is amino-acid biosynthesis; L-histidine biosynthesis; L-histidine from 5-phospho-alpha-D-ribose 1-diphosphate: step 5/9. Its function is as follows. IGPS catalyzes the conversion of PRFAR and glutamine to IGP, AICAR and glutamate. The HisF subunit catalyzes the cyclization activity that produces IGP and AICAR from PRFAR using the ammonia provided by the HisH subunit. The chain is Imidazole glycerol phosphate synthase subunit HisF from Marinobacter nauticus (strain ATCC 700491 / DSM 11845 / VT8) (Marinobacter aquaeolei).